An 84-amino-acid chain; its full sequence is Glutaredoxin (84 aa).

The 84-residue stretch at 1 to 84 folds into the Glutaredoxin domain; sequence MPPVVIYTTA…AGKLDALLSA (84 aa). The cysteines at positions 12 and 15 are disulfide-linked.

The protein belongs to the glutaredoxin family. In terms of assembly, monomer.

Its subcellular location is the cytoplasm. Has a glutathione-disulfide oxidoreductase activity in the presence of NADPH and glutathione reductase. Reduces low molecular weight disulfides and proteins. The polypeptide is Glutaredoxin (grx) (Pseudomonas aeruginosa (strain ATCC 15692 / DSM 22644 / CIP 104116 / JCM 14847 / LMG 12228 / 1C / PRS 101 / PAO1)).